A 657-amino-acid chain; its full sequence is L-type lectin-domain containing receptor kinase I.8 (657 aa).

Positions 1–23 (MAPGLDLIWMVISFLLLIHLSSQ) are cleaved as a signal peptide. At 24–282 (QETGFSFNGF…QVPHPKMKTS (259 aa)) the chain is on the extracellular side. The tract at residues 25–257 (ETGFSFNGFR…NHYILGWSFS (233 aa)) is legume-lectin like. N-linked (GlcNAc...) asparagine glycosylation is found at asparagine 74, asparagine 124, asparagine 181, asparagine 204, and asparagine 225. The helical transmembrane segment at 283 to 303 (LLLILLLIVLGIILLVLLVGA) threads the bilayer. The Cytoplasmic portion of the chain corresponds to 304–657 (YLYRRNKYAE…THSIQYGIGR (354 aa)). Residues 339 to 611 (FHKDGFLGKG…VQYLDRQVSL (273 aa)) enclose the Protein kinase domain. ATP-binding positions include 345-353 (LGKGGFGEV) and lysine 366. Aspartate 462 acts as the Proton acceptor in catalysis.

In the C-terminal section; belongs to the protein kinase superfamily. Ser/Thr protein kinase family. This sequence in the N-terminal section; belongs to the leguminous lectin family.

It localises to the cell membrane. The catalysed reaction is L-seryl-[protein] + ATP = O-phospho-L-seryl-[protein] + ADP + H(+). It catalyses the reaction L-threonyl-[protein] + ATP = O-phospho-L-threonyl-[protein] + ADP + H(+). Its function is as follows. Involved in resistance response to the pathogenic fungus Alternaria brassicicola. The sequence is that of L-type lectin-domain containing receptor kinase I.8 from Arabidopsis thaliana (Mouse-ear cress).